Consider the following 357-residue polypeptide: Dihydroorotate dehydrogenase (quinone) (357 aa).

Residues 66 to 70 and threonine 90 each bind FMN; that span reads AGFDK. Lysine 70 is a binding site for substrate. A substrate-binding site is contributed by 115 to 119; that stretch reads NRMGF. The FMN site is built by asparagine 143 and asparagine 176. Residue asparagine 176 coordinates substrate. The Nucleophile role is filled by serine 179. Residue asparagine 181 coordinates substrate. Lysine 212 and threonine 240 together coordinate FMN. 241–242 serves as a coordination point for substrate; sequence NT. FMN is bound by residues glycine 264, glycine 293, and 314 to 315; that span reads YT.

It belongs to the dihydroorotate dehydrogenase family. Type 2 subfamily. As to quaternary structure, monomer. It depends on FMN as a cofactor.

The protein localises to the cell membrane. It carries out the reaction (S)-dihydroorotate + a quinone = orotate + a quinol. Its pathway is pyrimidine metabolism; UMP biosynthesis via de novo pathway; orotate from (S)-dihydroorotate (quinone route): step 1/1. In terms of biological role, catalyzes the conversion of dihydroorotate to orotate with quinone as electron acceptor. The polypeptide is Dihydroorotate dehydrogenase (quinone) (Mycobacterium bovis (strain BCG / Pasteur 1173P2)).